Here is a 369-residue protein sequence, read N- to C-terminus: DNA replication and repair protein RecF (369 aa).

Residue 30–37 (GDNAQGKT) participates in ATP binding.

It belongs to the RecF family.

It localises to the cytoplasm. Its function is as follows. The RecF protein is involved in DNA metabolism; it is required for DNA replication and normal SOS inducibility. RecF binds preferentially to single-stranded, linear DNA. It also seems to bind ATP. The polypeptide is DNA replication and repair protein RecF (Streptococcus equi subsp. zooepidemicus (strain H70)).